A 362-amino-acid polypeptide reads, in one-letter code: Methylthioribose-1-phosphate isomerase (362 aa).

Substrate-binding positions include 49–51, Arg89, and Gln201; that span reads RGA. Residue Asp242 is the Proton donor of the active site. Residue 252-253 participates in substrate binding; sequence NK.

The protein belongs to the eIF-2B alpha/beta/delta subunits family. MtnA subfamily.

The enzyme catalyses 5-(methylsulfanyl)-alpha-D-ribose 1-phosphate = 5-(methylsulfanyl)-D-ribulose 1-phosphate. Its pathway is amino-acid biosynthesis; L-methionine biosynthesis via salvage pathway; L-methionine from S-methyl-5-thio-alpha-D-ribose 1-phosphate: step 1/6. Functionally, catalyzes the interconversion of methylthioribose-1-phosphate (MTR-1-P) into methylthioribulose-1-phosphate (MTRu-1-P). The chain is Methylthioribose-1-phosphate isomerase from Leptospira borgpetersenii serovar Hardjo-bovis (strain JB197).